A 213-amino-acid chain; its full sequence is RNA polymerase I subunit H (213 aa).

Over residues 1–19 the composition is skewed to basic and acidic residues; it reads MVERMKKDTGDETKTKVQE. Positions 1–70 are disordered; sequence MVERMKKDTG…AREFTDKPWR (70 aa). Residues 21 to 31 show a composition bias toward pro residues; that stretch reads PPSPSPPPPPP. Basic and acidic residues-rich tracts occupy residues 43-53 and 60-69; these read VPEREKKQIER and HAREFTDKPW.

As to expression, expressed during spermatogenesis, initially at pachytene stage with abundance increasing in round spermatids and decreasing again during spermatid elongation.

May be involved in male sterility. This chain is RNA polymerase I subunit H, found in Mus musculus (Mouse).